We begin with the raw amino-acid sequence, 886 residues long: Protein translocase subunit SecA (886 aa).

Residues Gln85, 103–107, and Asp492 each bind ATP; that span reads GEGKT. The span at 841–864 shows a compositional bias: basic and acidic residues; the sequence is RVVENRYAEEGPKQPARRENKVGR. The tract at residues 841 to 866 is disordered; the sequence is RVVENRYAEEGPKQPARRENKVGRND. Zn(2+) is bound by residues Cys868, Cys870, Cys879, and Cys880.

The protein belongs to the SecA family. Monomer and homodimer. Part of the essential Sec protein translocation apparatus which comprises SecA, SecYEG and auxiliary proteins SecDF. Other proteins may also be involved. Zn(2+) is required as a cofactor.

It localises to the cell membrane. Its subcellular location is the cytoplasm. The enzyme catalyses ATP + H2O + cellular proteinSide 1 = ADP + phosphate + cellular proteinSide 2.. Functionally, part of the Sec protein translocase complex. Interacts with the SecYEG preprotein conducting channel. Has a central role in coupling the hydrolysis of ATP to the transfer of proteins into and across the cell membrane, serving as an ATP-driven molecular motor driving the stepwise translocation of polypeptide chains across the membrane. In Pelotomaculum thermopropionicum (strain DSM 13744 / JCM 10971 / SI), this protein is Protein translocase subunit SecA.